Here is a 606-residue protein sequence, read N- to C-terminus: NADH-ubiquinone oxidoreductase chain 5 (606 aa).

Transmembrane regions (helical) follow at residues Met1–Met21, Ala43–Ile63, Val87–Tyr107, Pro112–Val132, Leu137–Trp157, Ala171–Thr191, Leu213–Leu233, Thr241–Ile261, Val273–Ile293, Ile301–Gln321, Leu324–Gly344, Met366–Leu386, Trp407–Phe429, Leu457–Val477, Met482–Leu502, and Gly582–Phe602.

Belongs to the complex I subunit 5 family. As to quaternary structure, core subunit of respiratory chain NADH dehydrogenase (Complex I) which is composed of 45 different subunits.

The protein localises to the mitochondrion inner membrane. It catalyses the reaction a ubiquinone + NADH + 5 H(+)(in) = a ubiquinol + NAD(+) + 4 H(+)(out). Functionally, core subunit of the mitochondrial membrane respiratory chain NADH dehydrogenase (Complex I) which catalyzes electron transfer from NADH through the respiratory chain, using ubiquinone as an electron acceptor. Essential for the catalytic activity and assembly of complex I. This chain is NADH-ubiquinone oxidoreductase chain 5 (MT-ND5), found in Sus scrofa (Pig).